The sequence spans 178 residues: Inorganic pyrophosphatase (178 aa).

Substrate is bound by residues Lys30, Arg44, and Tyr56. Residues Asp66, Asp71, and Asp103 each coordinate Mg(2+). Tyr140 contacts substrate.

Belongs to the PPase family. As to quaternary structure, homohexamer. Mg(2+) serves as cofactor.

It is found in the cytoplasm. It carries out the reaction diphosphate + H2O = 2 phosphate + H(+). Functionally, catalyzes the hydrolysis of inorganic pyrophosphate (PPi) forming two phosphate ions. The chain is Inorganic pyrophosphatase from Pyrococcus horikoshii (strain ATCC 700860 / DSM 12428 / JCM 9974 / NBRC 100139 / OT-3).